Reading from the N-terminus, the 279-residue chain is 4-hydroxy-3-methylbut-2-enyl diphosphate reductase (279 aa).

C12 is a [4Fe-4S] cluster binding site. Residues H42 and H74 each coordinate (2E)-4-hydroxy-3-methylbut-2-enyl diphosphate. Dimethylallyl diphosphate contacts are provided by H42 and H74. Isopentenyl diphosphate-binding residues include H42 and H74. C96 lines the [4Fe-4S] cluster pocket. H124 contacts (2E)-4-hydroxy-3-methylbut-2-enyl diphosphate. H124 contacts dimethylallyl diphosphate. Isopentenyl diphosphate is bound at residue H124. The active-site Proton donor is the E126. T162 is a (2E)-4-hydroxy-3-methylbut-2-enyl diphosphate binding site. C190 lines the [4Fe-4S] cluster pocket. Positions 218, 219, 220, and 263 each coordinate (2E)-4-hydroxy-3-methylbut-2-enyl diphosphate. Residues S218, S219, N220, and S263 each coordinate dimethylallyl diphosphate. S218, S219, N220, and S263 together coordinate isopentenyl diphosphate.

It belongs to the IspH family. The cofactor is [4Fe-4S] cluster.

It catalyses the reaction isopentenyl diphosphate + 2 oxidized [2Fe-2S]-[ferredoxin] + H2O = (2E)-4-hydroxy-3-methylbut-2-enyl diphosphate + 2 reduced [2Fe-2S]-[ferredoxin] + 2 H(+). The enzyme catalyses dimethylallyl diphosphate + 2 oxidized [2Fe-2S]-[ferredoxin] + H2O = (2E)-4-hydroxy-3-methylbut-2-enyl diphosphate + 2 reduced [2Fe-2S]-[ferredoxin] + 2 H(+). The protein operates within isoprenoid biosynthesis; dimethylallyl diphosphate biosynthesis; dimethylallyl diphosphate from (2E)-4-hydroxy-3-methylbutenyl diphosphate: step 1/1. Its pathway is isoprenoid biosynthesis; isopentenyl diphosphate biosynthesis via DXP pathway; isopentenyl diphosphate from 1-deoxy-D-xylulose 5-phosphate: step 6/6. Catalyzes the conversion of 1-hydroxy-2-methyl-2-(E)-butenyl 4-diphosphate (HMBPP) into a mixture of isopentenyl diphosphate (IPP) and dimethylallyl diphosphate (DMAPP). Acts in the terminal step of the DOXP/MEP pathway for isoprenoid precursor biosynthesis. The protein is 4-hydroxy-3-methylbut-2-enyl diphosphate reductase of Alkaliphilus oremlandii (strain OhILAs) (Clostridium oremlandii (strain OhILAs)).